The sequence spans 97 residues: Protein RnfH (97 aa).

It belongs to the UPF0125 (RnfH) family.

This Proteus mirabilis (strain HI4320) protein is Protein RnfH.